The primary structure comprises 366 residues: Anthranilate phosphoribosyltransferase (366 aa).

Residues Gly79, 82–83, Thr87, 89–92, 107–115, and Ser119 contribute to the 5-phospho-alpha-D-ribose 1-diphosphate site; these read GD, NIST, and KHGNRAATS. Gly79 is a binding site for anthranilate. Ser91 serves as a coordination point for Mg(2+). Asn110 contacts anthranilate. Arg165 is an anthranilate binding site. Mg(2+) contacts are provided by Asp223 and Glu224. Positions 342 to 366 are disordered; the sequence is ESLSGKSMSMRSRTSILSPASGERV. Residues 345–359 are compositionally biased toward polar residues; the sequence is SGKSMSMRSRTSILS.

Belongs to the anthranilate phosphoribosyltransferase family. As to quaternary structure, homodimer. The cofactor is Mg(2+).

It catalyses the reaction N-(5-phospho-beta-D-ribosyl)anthranilate + diphosphate = 5-phospho-alpha-D-ribose 1-diphosphate + anthranilate. It participates in amino-acid biosynthesis; L-tryptophan biosynthesis; L-tryptophan from chorismate: step 2/5. In terms of biological role, catalyzes the transfer of the phosphoribosyl group of 5-phosphorylribose-1-pyrophosphate (PRPP) to anthranilate to yield N-(5'-phosphoribosyl)-anthranilate (PRA). This Methanosarcina barkeri (strain Fusaro / DSM 804) protein is Anthranilate phosphoribosyltransferase.